Consider the following 371-residue polypeptide: Protein maelstrom 1 (371 aa).

The HMG box DNA-binding region spans 2–68; it reads AQNKPNAFMA…VLERESKTER (67 aa).

This sequence belongs to the maelstrom family.

It is found in the cytoplasm. The protein localises to the nucleus. Its function is as follows. Involved both in the piRNA and miRNA metabolic processes. As a component of the meiotic nuage, plays a central role during oogenesis by repressing transposable elements and preventing their mobilization, which is essential for the germline integrity. Repression of transposable elements is mediated via the piRNA metabolic process, which mediates the repression of transposable elements during meiosis by forming complexes composed of piRNAs and Piwi proteins and governs the repression of transposons. As a nuclear component, it is required for proper differentiation in the germline stem cell (GSC) lineage by repressing microRNA-7 (miR-7), thereby acting as an indirect regulator of bag-of-marbles (Bam). Acts by binding to the promoter of miR-7 gene and repressing its expression; miR-7 repression alleviates the Bam repression by miR-7, thereby allowing differentiation in the germline stem cell (GSC) lineage. The sequence is that of Protein maelstrom 1 (mael1) from Drosophila pseudoobscura pseudoobscura (Fruit fly).